We begin with the raw amino-acid sequence, 882 residues long: DNA mismatch repair protein MutS (882 aa).

Residue 629-636 coordinates ATP; that stretch reads GPNMGGKS.

Belongs to the DNA mismatch repair MutS family.

Its function is as follows. This protein is involved in the repair of mismatches in DNA. It is possible that it carries out the mismatch recognition step. This protein has a weak ATPase activity. This Ralstonia nicotianae (strain ATCC BAA-1114 / GMI1000) (Ralstonia solanacearum) protein is DNA mismatch repair protein MutS.